We begin with the raw amino-acid sequence, 90 residues long: UPF0729 protein Bm1_03610 (90 aa).

It belongs to the UPF0729 family.

This Brugia malayi (Filarial nematode worm) protein is UPF0729 protein Bm1_03610.